We begin with the raw amino-acid sequence, 338 residues long: Nicotinate-nucleotide--dimethylbenzimidazole phosphoribosyltransferase (338 aa).

The active-site Proton acceptor is the E305.

This sequence belongs to the CobT family.

It catalyses the reaction 5,6-dimethylbenzimidazole + nicotinate beta-D-ribonucleotide = alpha-ribazole 5'-phosphate + nicotinate + H(+). The protein operates within nucleoside biosynthesis; alpha-ribazole biosynthesis; alpha-ribazole from 5,6-dimethylbenzimidazole: step 1/2. Its function is as follows. Catalyzes the synthesis of alpha-ribazole-5'-phosphate from nicotinate mononucleotide (NAMN) and 5,6-dimethylbenzimidazole (DMB). The sequence is that of Nicotinate-nucleotide--dimethylbenzimidazole phosphoribosyltransferase from Sinorhizobium fredii (strain NBRC 101917 / NGR234).